A 150-amino-acid polypeptide reads, in one-letter code: 16.6 kDa heat shock protein (150 aa).

The region spanning 31–150 (AERCPVLTNV…PQLKAIPISG (120 aa)) is the sHSP domain.

The protein belongs to the small heat shock protein (HSP20) family. As to quaternary structure, may form oligomeric structures.

It is found in the cytoplasm. The protein is 16.6 kDa heat shock protein (HSP16.6) of Oryza sativa subsp. japonica (Rice).